Here is a 99-residue protein sequence, read N- to C-terminus: Integration host factor subunit alpha (99 aa).

It belongs to the bacterial histone-like protein family. In terms of assembly, heterodimer of an alpha and a beta chain.

Functionally, this protein is one of the two subunits of integration host factor, a specific DNA-binding protein that functions in genetic recombination as well as in transcriptional and translational control. The polypeptide is Integration host factor subunit alpha (Psychrobacter cryohalolentis (strain ATCC BAA-1226 / DSM 17306 / VKM B-2378 / K5)).